A 305-amino-acid chain; its full sequence is Recombination-associated protein RdgC (305 aa).

The protein belongs to the RdgC family.

Its subcellular location is the cytoplasm. The protein resides in the nucleoid. In terms of biological role, may be involved in recombination. The polypeptide is Recombination-associated protein RdgC (Sodalis glossinidius (strain morsitans)).